A 186-amino-acid chain; its full sequence is MKLIAGLGNPGKKYERTRHNVGFMVVDELSFRHQTPWKKSKFNGMTSEIIVGGEKMILVKPLTFMNASGECIRPLMDYYNIPIEDVVIVYDDLDLPVGKIRLRQKGSAGGHNGMKSIIQHVKTQEFNRIRVGVSRPLKGEVIHYVLGDFPKAEQPDIIAAIQKSADAIEDYAQTPFIEVMNKYNQK.

Tyrosine 14 is a binding site for tRNA. The active-site Proton acceptor is the histidine 19. Residues phenylalanine 64, asparagine 66, and asparagine 112 each contribute to the tRNA site.

Belongs to the PTH family. As to quaternary structure, monomer.

It is found in the cytoplasm. The enzyme catalyses an N-acyl-L-alpha-aminoacyl-tRNA + H2O = an N-acyl-L-amino acid + a tRNA + H(+). Its function is as follows. Hydrolyzes ribosome-free peptidyl-tRNAs (with 1 or more amino acids incorporated), which drop off the ribosome during protein synthesis, or as a result of ribosome stalling. Catalyzes the release of premature peptidyl moieties from peptidyl-tRNA molecules trapped in stalled 50S ribosomal subunits, and thus maintains levels of free tRNAs and 50S ribosomes. The polypeptide is Peptidyl-tRNA hydrolase (Listeria monocytogenes serotype 4a (strain HCC23)).